The following is a 739-amino-acid chain: MSLMLEPNPTQIKEERIYAEMGLTDEEFAMVEKILGRLPNYTETGLFSVMWSEHCSYKNSKPVLRKFPTTGERVLQGPGEGAGIVDIGDNQAVVFKMESHNHPSAIEPYQGAATGVGGIIRDVFSMGARPVALLNSLRFGELQSPRVKYLFEEVVAGIAGYGNCIGIPTVGGEVQFDPCYEGNPLVNAMCVGLINHEDIKKGQAHGAGNTVMYVGASTGRDGIHGATFASEELSESSEAKRPAVQVGDPFMEKLLIEACLELIQSDALVGIQDMGAAGLTSSSAEMASKAGMGIEMYLDDVPQRETGMTPYEMMLSESQERMLIVVKKGREQEIVDLFEKYGLAAVTMGKVTEDKMLRLFHKGEMVAEVPADALAEEAPIYHKPSKEAAYFAEFQQMKMETPKVENYKETLFALLQQPTIASKEWVYDQYDYQVRTSTVVTPGSDAAVVRVRGTEKGLAMTTDCNSRYIYLDPEVGGKIAVAEAARNIVCSGGEPLAITDCLNFGNPEKPEIFWQIEKSVDGMSEACRTLQTPVIGGNVSMYNERSGEAVYPTPTVGMVGLVHDLKHVTTQEFKQAGDLVYVIGETKAEFGGSELQKMLHGKIFGQSPSIDLDVELKRQKQVLAAIQAGLVQSAHDVAEGGLAVAISESAIGANGLGATVKLDGEATAALFAESQSRFVITVKRENKEAFEKAVEAIQVGEVTNTNEVTIHNEENEVLLTANVDEMRKAWKGAIPCLLK.

The active site involves His54. ATP contacts are provided by Tyr57 and Lys96. Glu98 lines the Mg(2+) pocket. Substrate contacts are provided by residues 99-102 (SHNH) and Arg121. His100 acts as the Proton acceptor in catalysis. Asp122 lines the Mg(2+) pocket. Gln245 is a substrate binding site. Asp273 lines the Mg(2+) pocket. 317-319 (ESQ) contributes to the substrate binding site. ATP-binding residues include Asp500 and Gly537. A Mg(2+)-binding site is contributed by Asn538. Ser540 is a binding site for substrate.

It belongs to the FGAMS family. As to quaternary structure, monomer. Part of the FGAM synthase complex composed of 1 PurL, 1 PurQ and 2 PurS subunits.

It localises to the cytoplasm. It catalyses the reaction N(2)-formyl-N(1)-(5-phospho-beta-D-ribosyl)glycinamide + L-glutamine + ATP + H2O = 2-formamido-N(1)-(5-O-phospho-beta-D-ribosyl)acetamidine + L-glutamate + ADP + phosphate + H(+). It functions in the pathway purine metabolism; IMP biosynthesis via de novo pathway; 5-amino-1-(5-phospho-D-ribosyl)imidazole from N(2)-formyl-N(1)-(5-phospho-D-ribosyl)glycinamide: step 1/2. Part of the phosphoribosylformylglycinamidine synthase complex involved in the purines biosynthetic pathway. Catalyzes the ATP-dependent conversion of formylglycinamide ribonucleotide (FGAR) and glutamine to yield formylglycinamidine ribonucleotide (FGAM) and glutamate. The FGAM synthase complex is composed of three subunits. PurQ produces an ammonia molecule by converting glutamine to glutamate. PurL transfers the ammonia molecule to FGAR to form FGAM in an ATP-dependent manner. PurS interacts with PurQ and PurL and is thought to assist in the transfer of the ammonia molecule from PurQ to PurL. The sequence is that of Phosphoribosylformylglycinamidine synthase subunit PurL from Bacillus anthracis (strain A0248).